Reading from the N-terminus, the 393-residue chain is MDLLSPLSAIVLTYREVDTDTLGKIGEEMRKCLEQMGRGTPIYVLHTCGRVEAYLYGASPEEVQTVAETYRKYVNSVRIIAGVEAARHLFRVAAGLDSMLIGETDVLGQLEEAFDRQVRAGYTRGLLKTIVERAVRVGKRVRTETAISRGPRGLGSLSIIYVSRLLDMRQAKVAVLGAGAVGAGLAMELAARGVKKLYILNRTLEKAKEVAAKTGGEARPLTKEEVERCLRECDVVFSSVHSMEYIIDKIPEGASVKVVVDLGVPQTVASGLPVKVVRIEDLREIAEQYNAERASEIAKAEAIVEEELAILPKLLARRYIEETVSTFIETAMLAAEEEGARAGCNTATLAARTTVKRILLPLVERLKKMAEDGQIEEAVKLAQMLSQTIGRKI.

Substrate-binding positions include 47–50, serine 98, 103–105, and glutamine 109; these read TCGR and ETD. Cysteine 48 acts as the Nucleophile in catalysis. Position 177-182 (177-182) interacts with NADP(+); it reads GAGAVG.

It belongs to the glutamyl-tRNA reductase family. As to quaternary structure, homodimer.

It carries out the reaction (S)-4-amino-5-oxopentanoate + tRNA(Glu) + NADP(+) = L-glutamyl-tRNA(Glu) + NADPH + H(+). The protein operates within porphyrin-containing compound metabolism; protoporphyrin-IX biosynthesis; 5-aminolevulinate from L-glutamyl-tRNA(Glu): step 1/2. In terms of biological role, catalyzes the NADPH-dependent reduction of glutamyl-tRNA(Glu) to glutamate 1-semialdehyde (GSA). In Pyrobaculum islandicum (strain DSM 4184 / JCM 9189 / GEO3), this protein is Glutamyl-tRNA reductase.